The primary structure comprises 104 residues: L-rhamnose mutarotase (104 aa).

Tyr18 contributes to the substrate binding site. The active-site Proton donor is the His22. Residues Tyr41 and 76-77 (WW) each bind substrate.

Belongs to the rhamnose mutarotase family. In terms of assembly, homodimer.

It localises to the cytoplasm. It catalyses the reaction alpha-L-rhamnose = beta-L-rhamnose. The protein operates within carbohydrate metabolism; L-rhamnose metabolism. Its function is as follows. Involved in the anomeric conversion of L-rhamnose. The protein is L-rhamnose mutarotase of Escherichia coli O7:K1 (strain IAI39 / ExPEC).